A 415-amino-acid chain; its full sequence is Multidrug resistance protein MdtA (415 aa).

An N-terminal signal peptide occupies residues 1–21 (MKGSYKSRWVIVIVVVIAAIA). Residues 34–47 (SAAPGATKQAQQSP) show a composition bias toward polar residues. 2 disordered regions span residues 34–60 (SAAPGATKQAQQSPAGGRRGMRSGPLA) and 392–415 (EAQSATTPEEKATSREYAKKGARS). The span at 399 to 415 (PEEKATSREYAKKGARS) shows a compositional bias: basic and acidic residues.

The protein belongs to the membrane fusion protein (MFP) (TC 8.A.1) family. As to quaternary structure, part of a tripartite efflux system composed of MdtA, MdtB and MdtC.

It is found in the cell inner membrane. Its function is as follows. The MdtABC tripartite complex confers resistance against novobiocin and deoxycholate. The sequence is that of Multidrug resistance protein MdtA from Escherichia fergusonii (strain ATCC 35469 / DSM 13698 / CCUG 18766 / IAM 14443 / JCM 21226 / LMG 7866 / NBRC 102419 / NCTC 12128 / CDC 0568-73).